Consider the following 199-residue polypeptide: Small ribosomal subunit protein eS1 (199 aa).

It belongs to the eukaryotic ribosomal protein eS1 family.

This is Small ribosomal subunit protein eS1 from Pyrococcus abyssi (strain GE5 / Orsay).